Reading from the N-terminus, the 148-residue chain is Large ribosomal subunit protein uL15 (148 aa).

A compositionally biased stretch (basic residues) spans 1-30 (MPSRLRKTRKLRGHVSHGHGRIGKHRKHPG). Residues 1–37 (MPSRLRKTRKLRGHVSHGHGRIGKHRKHPGGRGNAGG) form a disordered region. (3S)-3-hydroxyhistidine is present on His-39. An N6-acetyllysine mark is found at Lys-47 and Lys-55. Ser-68 bears the Phosphoserine mark. Lys-110 carries the N6-acetyllysine modification.

This sequence belongs to the universal ribosomal protein uL15 family. In terms of assembly, component of the large ribosomal subunit. Hydroxylated on His-39 by MINA.

The protein localises to the cytoplasm. Its function is as follows. Component of the large ribosomal subunit. The ribosome is a large ribonucleoprotein complex responsible for the synthesis of proteins in the cell. This chain is Large ribosomal subunit protein uL15 (RPL27A), found in Bos taurus (Bovine).